A 238-amino-acid chain; its full sequence is MVHLRRSLAPYWWPIPRKAGGVWVVKPSPGPHSFAYSLPLAIVIRDVLRYAKTLREARYIVSRGYIKVDGVVRKDYRFPVGLMDVIEIVPTGEVYRVVPDQDRYYNLLPIPSSEASLKLLRVEGKTTVNGGRLQLHFHDGRNLITSPDMGAKIKTFDTILYDLENKTIKTHIPMKLGVVAVVTHGSNVGFSGKLYEIVWTLKRRQSVVGLKKGEEVRRTILDYIMAVGEESPVIKITP.

In terms of domain architecture, S4 RNA-binding spans 38 to 100 (LPLAIVIRDV…TGEVYRVVPD (63 aa)).

This sequence belongs to the eukaryotic ribosomal protein eS4 family.

The chain is Small ribosomal subunit protein eS4 from Pyrobaculum arsenaticum (strain DSM 13514 / JCM 11321 / PZ6).